Here is an 81-residue protein sequence, read N- to C-terminus: Omega-conotoxin-like 3 (81 aa).

The signal sequence occupies residues 1-22 (MKLTCMMIVAVLFLTASIFITA). A propeptide spanning residues 23-51 (DNSRNGIENLPRMRRHEMKKPKASKLNKR) is cleaved from the precursor. 3 disulfides stabilise this stretch: Cys53–Cys71, Cys60–Cys75, and Cys70–Cys79.

Belongs to the conotoxin O1 superfamily. As to expression, expressed by the venom duct.

Its subcellular location is the secreted. Functionally, omega-conotoxins act at presynaptic membranes, they bind and block voltage-gated calcium channels (Cav). This chain is Omega-conotoxin-like 3, found in Conus imperialis (Imperial cone).